A 442-amino-acid polypeptide reads, in one-letter code: tRNA-2-methylthio-N(6)-dimethylallyladenosine synthase (442 aa).

The region spanning 5–122 (KKVFIKTLGC…LPEMIKQKQK (118 aa)) is the MTTase N-terminal domain. [4Fe-4S] cluster-binding residues include C14, C51, C85, C159, C163, and C166. The Radical SAM core domain occupies 145–378 (KAEGAKAYVS…DLLNSNAQII (234 aa)). One can recognise a TRAM domain in the interval 380–442 (RQMVGTNQRI…LPNSLRGELI (63 aa)).

It belongs to the methylthiotransferase family. MiaB subfamily. As to quaternary structure, monomer. Requires [4Fe-4S] cluster as cofactor.

It is found in the cytoplasm. It catalyses the reaction N(6)-dimethylallyladenosine(37) in tRNA + (sulfur carrier)-SH + AH2 + 2 S-adenosyl-L-methionine = 2-methylsulfanyl-N(6)-dimethylallyladenosine(37) in tRNA + (sulfur carrier)-H + 5'-deoxyadenosine + L-methionine + A + S-adenosyl-L-homocysteine + 2 H(+). Functionally, catalyzes the methylthiolation of N6-(dimethylallyl)adenosine (i(6)A), leading to the formation of 2-methylthio-N6-(dimethylallyl)adenosine (ms(2)i(6)A) at position 37 in tRNAs that read codons beginning with uridine. The chain is tRNA-2-methylthio-N(6)-dimethylallyladenosine synthase from Francisella tularensis subsp. tularensis (strain FSC 198).